The primary structure comprises 143 residues: Rheacalcin-2 (143 aa).

Cystine bridges form between C6/C17, C34/C139, and C114/C131. One can recognise a C-type lectin domain in the interval 13–140 (FDGRCFGFFP…CSDRKPFICE (128 aa)). Phosphoserine occurs at positions 66 and 68.

The protein localises to the secreted. It localises to the extracellular space. The protein resides in the extracellular matrix. This Rhea americana (Greater rhea) protein is Rheacalcin-2.